The following is a 200-amino-acid chain: MELNFEKPLSLLTLDEIDQQEGGVIQSFRTGHTSPYPDPADWLNGEEPPPGVFITSVEKVLNWSRHYSLWPVMFGLACCAIEMMCMAASRWDLARFGMDIFRASPRQADLMIVAGTLTWKMAPWLKRIYDQMPEPKWVLAMGACGTSGGLFRDSYSVVPGFNLVVPVDVYVPGCPPRPEALMRAIMDIHEKIDKTRILKR.

Residues Cys-78, Cys-79, Cys-144, and Cys-174 each coordinate [4Fe-4S] cluster.

The protein belongs to the complex I 20 kDa subunit family. NDH-1 is composed of 14 different subunits. Subunits NuoB, C, D, E, F, and G constitute the peripheral sector of the complex. The cofactor is [4Fe-4S] cluster.

The protein localises to the cell membrane. It carries out the reaction a quinone + NADH + 5 H(+)(in) = a quinol + NAD(+) + 4 H(+)(out). Functionally, NDH-1 shuttles electrons from NADH, via FMN and iron-sulfur (Fe-S) centers, to quinones in the respiratory chain. The immediate electron acceptor for the enzyme in this species is believed to be ubiquinone. Couples the redox reaction to proton translocation (for every two electrons transferred, four hydrogen ions are translocated across the cytoplasmic membrane), and thus conserves the redox energy in a proton gradient. In Dehalococcoides mccartyi (strain CBDB1), this protein is NADH-quinone oxidoreductase subunit B.